Reading from the N-terminus, the 130-residue chain is Small ribosomal subunit protein uS9 (130 aa).

Residues 108–130 (SREVERKKVGLRKARKRPQYSKR) are disordered. Over residues 116–130 (VGLRKARKRPQYSKR) the composition is skewed to basic residues.

Belongs to the universal ribosomal protein uS9 family.

This is Small ribosomal subunit protein uS9 from Cellvibrio japonicus (strain Ueda107) (Pseudomonas fluorescens subsp. cellulosa).